The chain runs to 280 residues: Ribosomal RNA small subunit methyltransferase A (280 aa).

Residues H15, L17, G42, E64, D89, and N109 each contribute to the S-adenosyl-L-methionine site.

The protein belongs to the class I-like SAM-binding methyltransferase superfamily. rRNA adenine N(6)-methyltransferase family. RsmA subfamily.

Its subcellular location is the cytoplasm. The catalysed reaction is adenosine(1518)/adenosine(1519) in 16S rRNA + 4 S-adenosyl-L-methionine = N(6)-dimethyladenosine(1518)/N(6)-dimethyladenosine(1519) in 16S rRNA + 4 S-adenosyl-L-homocysteine + 4 H(+). Specifically dimethylates two adjacent adenosines (A1518 and A1519) in the loop of a conserved hairpin near the 3'-end of 16S rRNA in the 30S particle. May play a critical role in biogenesis of 30S subunits. This chain is Ribosomal RNA small subunit methyltransferase A, found in Prochlorococcus marinus (strain MIT 9313).